The sequence spans 88 residues: Sec-independent protein translocase protein TatA (88 aa).

A helical transmembrane segment spans residues 1–21; it reads MGGISIWQLLIIALIVVLLFG. Residues 43 to 88 form a disordered region; that stretch reads MSSEEDKKALEDAEAAKPVQTAQTVQSAQPTQQATEKKPESNKEQA. Positions 46–57 are enriched in basic and acidic residues; that stretch reads EEDKKALEDAEA. Positions 62–76 are enriched in polar residues; that stretch reads QTAQTVQSAQPTQQA. Residues 77-88 are compositionally biased toward basic and acidic residues; the sequence is TEKKPESNKEQA.

The protein belongs to the TatA/E family. The Tat system comprises two distinct complexes: a TatABC complex, containing multiple copies of TatA, TatB and TatC subunits, and a separate TatA complex, containing only TatA subunits. Substrates initially bind to the TatABC complex, which probably triggers association of the separate TatA complex to form the active translocon.

It is found in the cell inner membrane. In terms of biological role, part of the twin-arginine translocation (Tat) system that transports large folded proteins containing a characteristic twin-arginine motif in their signal peptide across membranes. TatA could form the protein-conducting channel of the Tat system. The sequence is that of Sec-independent protein translocase protein TatA from Shewanella oneidensis (strain ATCC 700550 / JCM 31522 / CIP 106686 / LMG 19005 / NCIMB 14063 / MR-1).